A 68-amino-acid chain; its full sequence is Protein SlyX homolog (68 aa).

The protein belongs to the SlyX family.

The protein is Protein SlyX homolog of Pseudomonas syringae pv. syringae (strain B728a).